The sequence spans 611 residues: Large ribosomal subunit assembly factor BipA (611 aa).

In terms of domain architecture, tr-type G spans 7–202 (KNLRNIAIIA…AIVKYTPPPT (196 aa)). GTP contacts are provided by residues 19–24 (DHGKTT) and 132–135 (NKID).

It belongs to the TRAFAC class translation factor GTPase superfamily. Classic translation factor GTPase family. BipA subfamily. Monomer.

It localises to the cytoplasm. The enzyme catalyses GTP + H2O = GDP + phosphate + H(+). Functionally, a 50S ribosomal subunit assembly protein with GTPase activity, required for 50S subunit assembly at low temperatures, may also play a role in translation. Binds GTP and analogs. Binds the 70S ribosome between the 30S and 50S subunits, in a similar position as ribosome-bound EF-G; it contacts a number of ribosomal proteins, both rRNAs and the A-site tRNA. The sequence is that of Large ribosomal subunit assembly factor BipA from Buchnera aphidicola subsp. Baizongia pistaciae (strain Bp).